The primary structure comprises 73 residues: Protein SlyX homolog (73 aa).

The disordered stretch occupies residues 54-73; the sequence is LQQAESNAPAAPANERPPHY. Residues 57-67 show a composition bias toward low complexity; sequence AESNAPAAPAN.

The protein belongs to the SlyX family.

The protein is Protein SlyX homolog of Rhodopseudomonas palustris (strain BisA53).